We begin with the raw amino-acid sequence, 133 residues long: Salivary cystatin-L (133 aa).

Residues 1 to 19 form the signal peptide; it reads MTSSFALVLLLGGVAVCVA. The 88-residue stretch at 30 to 117 folds into the Cystatin domain; that stretch reads ANHQANPEFL…HRTCTTVVFE (88 aa). 2 cysteine pairs are disulfide-bonded: Cys89–Cys100 and Cys111–Cys130.

Belongs to the cystatin family. In terms of assembly, monomer. Can form homodimers in vitro, but probably not in vivo. Homodimers are predicted to be inactive; dimerization disrupts the interaction with target proteases.

The protein localises to the secreted. Functionally, inhibitor of cysteine proteinases. Inhibits host immune responses via its inhibition of host cathepsins. Contributes to the suppression of the host's immune response to tick salivary proteins and is important for successful feeding on hosts. Inhibits differentiation of host dendritic cells. Inhibits proliferation of host T-cells in response to antigen stimulus. Down-regulates TLR2-mediated host responses to infection by B.burgdorferi and the production of the chemokine CCL3 by host dendritic cells. Down-regulates host responses to infection by B.burgdorferi and the production of IFNB1 by host dendritic cells. Down-regulates IL1B production by host mast cells, and this then leads to impaired activation of IL1R1, resulting in decreased IL9 production. Inhibits host inflammatory reactions and recruitment of host neutrophils. Inhibits papain and cathepsin L (CTSL) (in vitro). Inhibits cathepsin S (CTSS) (in vitro). Inhibits CTSV and CTSC, but to a lesser degree (in vitro). This chain is Salivary cystatin-L, found in Ixodes scapularis (Black-legged tick).